Here is a 218-residue protein sequence, read N- to C-terminus: Small ribosomal subunit protein uS3 (218 aa).

Residues 38 to 107 (VREYIEKRLK…RVHVNVVEVK (70 aa)) enclose the KH type-2 domain.

The protein belongs to the universal ribosomal protein uS3 family. Part of the 30S ribosomal subunit. Forms a tight complex with proteins S10 and S14.

Binds the lower part of the 30S subunit head. Binds mRNA in the 70S ribosome, positioning it for translation. The polypeptide is Small ribosomal subunit protein uS3 (Exiguobacterium sibiricum (strain DSM 17290 / CCUG 55495 / CIP 109462 / JCM 13490 / 255-15)).